The chain runs to 1700 residues: A-kinase anchor protein SPHKAP (1700 aa).

Disordered regions lie at residues 364-385, 742-778, and 793-885; these read SNLN…QDGE, IRRR…SNSH, and SKQD…NTQE. Over residues 768 to 778 the composition is skewed to low complexity; the sequence is SSSSSPLSNSH. Residues 822–831 are compositionally biased toward polar residues; that stretch reads DSSTATTSSK. Residues 839 to 855 are compositionally biased toward basic and acidic residues; sequence AGEDTKSPHHSENECRA. The span at 857–873 shows a compositional bias: polar residues; that stretch reads SEGQRSPTVSQSRSGSQ. Residues 929–946 are PKA-RII subunit binding domain; sequence FAEELADTVVSMATEIAA. Positions 980–1006 are disordered; sequence KRKKESQGSGTAVRKHKPPRLSEIKRK. 8 positions are modified to phosphoserine: serine 1025, serine 1085, serine 1107, serine 1120, serine 1121, serine 1124, serine 1259, and serine 1288. Disordered stretches follow at residues 1374–1414, 1481–1535, and 1585–1604; these read DSVT…PVPI, IHSD…DTSS, and GQSE…TASP. Residues 1383–1398 are compositionally biased toward polar residues; that stretch reads PVSSLSKTASLTNHSP. Residues 1586–1604 show a composition bias toward polar residues; the sequence is QSESTEAPASGPPTGTASP.

It belongs to the AKAP110 family. Interacts (via the PKA-RII subunit binding domain) with the RI subunit of PKA. Interacts with SPHK1; the interaction greatly reduces SPHK1 activity. Highly expressed in heart. Both isoforms abundantly expressed in ventricle. Also expressed in spleen, ovary and brain.

It is found in the cytoplasm. Functionally, anchoring protein that binds preferentially to the type I regulatory subunit of c-AMP-dependent protein kinase (PKA type I) and targets it to distinct subcellular compartments. May act as a converging factor linking cAMP and sphingosine signaling pathways. Plays a regulatory role in the modulation of SPHK1. In Homo sapiens (Human), this protein is A-kinase anchor protein SPHKAP (SPHKAP).